The sequence spans 77 residues: U-actitoxin-Avd12a (77 aa).

Residues 1–23 (MALFRMLFLCAVLVLLTSKEGMS) form the signal peptide. The propeptide occupies 24–29 (YEEPEN). An EGF-like domain is found at 31-73 (EGVACTGQYAESFCLNGGTCRYIQSIGEYYCICNGDYTGHRCE). 3 cysteine pairs are disulfide-bonded: cysteine 35–cysteine 50, cysteine 44–cysteine 61, and cysteine 63–cysteine 72.

The protein belongs to the EGF domain peptide family.

Its subcellular location is the secreted. It is found in the nematocyst. Functionally, has both toxic and EGF activity. Its EGF activity consists of rounding cells (morphological change) and inducing tyrosine phosphorylation of the EGFR in A431 cells, but with a lower potency that human EGF. This is U-actitoxin-Avd12a from Anemonia viridis (Snakelocks anemone).